The following is a 245-amino-acid chain: Ribonuclease PH (245 aa).

Residues Arg86 and 124 to 126 (GTR) each bind phosphate.

This sequence belongs to the RNase PH family. In terms of assembly, homohexameric ring arranged as a trimer of dimers.

It catalyses the reaction tRNA(n+1) + phosphate = tRNA(n) + a ribonucleoside 5'-diphosphate. Its function is as follows. Phosphorolytic 3'-5' exoribonuclease that plays an important role in tRNA 3'-end maturation. Removes nucleotide residues following the 3'-CCA terminus of tRNAs; can also add nucleotides to the ends of RNA molecules by using nucleoside diphosphates as substrates, but this may not be physiologically important. Probably plays a role in initiation of 16S rRNA degradation (leading to ribosome degradation) during starvation. The protein is Ribonuclease PH of Bacillus cereus (strain ATCC 10987 / NRS 248).